The sequence spans 205 residues: Ribosome maturation factor RimP (205 aa).

The protein belongs to the RimP family.

The protein resides in the cytoplasm. Required for maturation of 30S ribosomal subunits. This Sinorhizobium medicae (strain WSM419) (Ensifer medicae) protein is Ribosome maturation factor RimP.